The sequence spans 1299 residues: DNA-directed RNA polymerase subunit beta' (1299 aa).

Positions 60, 62, 75, and 78 each coordinate Zn(2+). The segment at 188-209 is disordered; the sequence is GAKSDQKRRAKDGAEKEMGQTR. Positions 535, 537, and 539 each coordinate Mg(2+). 4 residues coordinate Zn(2+): C882, C959, C966, and C969.

It belongs to the RNA polymerase beta' chain family. In terms of assembly, the RNAP catalytic core consists of 2 alpha, 1 beta, 1 beta' and 1 omega subunit. When a sigma factor is associated with the core the holoenzyme is formed, which can initiate transcription. It depends on Mg(2+) as a cofactor. Zn(2+) is required as a cofactor.

The catalysed reaction is RNA(n) + a ribonucleoside 5'-triphosphate = RNA(n+1) + diphosphate. In terms of biological role, DNA-dependent RNA polymerase catalyzes the transcription of DNA into RNA using the four ribonucleoside triphosphates as substrates. The sequence is that of DNA-directed RNA polymerase subunit beta' from Clavibacter sepedonicus (Clavibacter michiganensis subsp. sepedonicus).